A 250-amino-acid polypeptide reads, in one-letter code: 2,3-bisphosphoglycerate-dependent phosphoglycerate mutase (250 aa).

Residues 10–17, 23–24, Arg-62, 89–92, Lys-100, 116–117, and 185–186 contribute to the substrate site; these read RHGESQWN, TG, ERHY, RR, and GN. The Tele-phosphohistidine intermediate role is filled by His-11. Glu-89 acts as the Proton donor/acceptor in catalysis.

Belongs to the phosphoglycerate mutase family. BPG-dependent PGAM subfamily. In terms of assembly, homodimer.

The enzyme catalyses (2R)-2-phosphoglycerate = (2R)-3-phosphoglycerate. It participates in carbohydrate degradation; glycolysis; pyruvate from D-glyceraldehyde 3-phosphate: step 3/5. Functionally, catalyzes the interconversion of 2-phosphoglycerate and 3-phosphoglycerate. This is 2,3-bisphosphoglycerate-dependent phosphoglycerate mutase from Serratia proteamaculans (strain 568).